The following is a 171-amino-acid chain: Crossover junction endodeoxyribonuclease RuvC (171 aa).

Catalysis depends on residues D12, E72, and D144. 3 residues coordinate Mg(2+): D12, E72, and D144.

The protein belongs to the RuvC family. In terms of assembly, homodimer which binds Holliday junction (HJ) DNA. The HJ becomes 2-fold symmetrical on binding to RuvC with unstacked arms; it has a different conformation from HJ DNA in complex with RuvA. In the full resolvosome a probable DNA-RuvA(4)-RuvB(12)-RuvC(2) complex forms which resolves the HJ. It depends on Mg(2+) as a cofactor.

Its subcellular location is the cytoplasm. It carries out the reaction Endonucleolytic cleavage at a junction such as a reciprocal single-stranded crossover between two homologous DNA duplexes (Holliday junction).. Functionally, the RuvA-RuvB-RuvC complex processes Holliday junction (HJ) DNA during genetic recombination and DNA repair. Endonuclease that resolves HJ intermediates. Cleaves cruciform DNA by making single-stranded nicks across the HJ at symmetrical positions within the homologous arms, yielding a 5'-phosphate and a 3'-hydroxyl group; requires a central core of homology in the junction. The consensus cleavage sequence is 5'-(A/T)TT(C/G)-3'. Cleavage occurs on the 3'-side of the TT dinucleotide at the point of strand exchange. HJ branch migration catalyzed by RuvA-RuvB allows RuvC to scan DNA until it finds its consensus sequence, where it cleaves and resolves the cruciform DNA. The polypeptide is Crossover junction endodeoxyribonuclease RuvC (Afipia carboxidovorans (strain ATCC 49405 / DSM 1227 / KCTC 32145 / OM5) (Oligotropha carboxidovorans)).